We begin with the raw amino-acid sequence, 368 residues long: Peptidoglycan-recognition protein LA (368 aa).

At 1-127 (MFEENNSPTT…KSPSRRVTRN (127 aa)) the chain is on the cytoplasmic side. 2 disordered regions span residues 21 to 46 (QRAS…GLPL) and 101 to 122 (INSN…SPSR). 2 stretches are compositionally biased toward low complexity: residues 33-43 (TSAGSSTSSSG) and 102-113 (NSNNANGNGNAN). The helical transmembrane segment at 128-148 (TILLITLILLVLATGLIVLYV) threads the bilayer. Residues 149 to 368 (ELNRPKPELP…MKTESWDAKQ (220 aa)) lie on the Extracellular side of the membrane. Cysteine 221 and cysteine 227 are joined by a disulfide. The N-acetylmuramoyl-L-alanine amidase domain maps to 233–320 (TIQDSAIAEK…DVDYKLVAQN (88 aa)). N-linked (GlcNAc...) asparagine glycosylation is found at asparagine 273 and asparagine 320.

This sequence belongs to the N-acetylmuramoyl-L-alanine amidase 2 family. As to expression, expressed in uninduced hemocytes and mbn-2 cells.

It is found in the cell membrane. Its function is as follows. Peptidoglycan-recognition protein probably involved in innate immunity by binding to peptidoglycans (PGN) of bacteria and activating the immune response. The protein is Peptidoglycan-recognition protein LA (PGRP-LA) of Drosophila melanogaster (Fruit fly).